Here is a 344-residue protein sequence, read N- to C-terminus: GLIPR1-like protein 2 (344 aa).

The 135-residue stretch at 58 to 192 folds into the SCP domain; sequence VNLHNELRGD…IHAAIFICNY (135 aa). Residues 254-274 form a helical membrane-spanning segment; it reads TFILLLRILCFILCVITVLIV. 2 stretches are compositionally biased toward acidic residues: residues 292–304 and 312–334; these read EESEAGNEEEEKE and EMEMEIMEMEEEKEEREEEEEET. A disordered region spans residues 292–344; the sequence is EESEAGNEEEEKEEEKKEKEEMEMEIMEMEEEKEEREEEEEETQKEKMEEEEK. Residues 335-344 show a composition bias toward basic and acidic residues; sequence QKEKMEEEEK.

This sequence belongs to the CRISP family. Highly expressed in testis. Detected in prostate, kidney, bladder, lung and bone marrow.

The protein localises to the membrane. The sequence is that of GLIPR1-like protein 2 (GLIPR1L2) from Homo sapiens (Human).